Here is a 216-residue protein sequence, read N- to C-terminus: Uracil phosphoribosyltransferase (216 aa).

5-phospho-alpha-D-ribose 1-diphosphate contacts are provided by residues Arg-85, Arg-110, and 135–143 (DPMVATGYS). Uracil contacts are provided by residues Ile-200 and 205 to 207 (GDA). Asp-206 is a binding site for 5-phospho-alpha-D-ribose 1-diphosphate.

The protein belongs to the UPRTase family. Mg(2+) is required as a cofactor.

It catalyses the reaction UMP + diphosphate = 5-phospho-alpha-D-ribose 1-diphosphate + uracil. It participates in pyrimidine metabolism; UMP biosynthesis via salvage pathway; UMP from uracil: step 1/1. Its activity is regulated as follows. Allosterically activated by GTP. In terms of biological role, catalyzes the conversion of uracil and 5-phospho-alpha-D-ribose 1-diphosphate (PRPP) to UMP and diphosphate. The sequence is that of Uracil phosphoribosyltransferase from Paraburkholderia phytofirmans (strain DSM 17436 / LMG 22146 / PsJN) (Burkholderia phytofirmans).